Reading from the N-terminus, the 445-residue chain is Ribosome biogenesis protein YTM1 (445 aa).

The interval 8–89 (VKVKFFTREQ…EAVLNVEYTR (82 aa)) is ubiquitin-like (UBL) domain. Residues 99-445 (SFSNEDWVSA…FNKGDNIFKN (347 aa)) are sufficient for interaction with ERB1 and association with 66S pre-ribosomes. 7 WD repeats span residues 101–138 (SNEDWVSALDVGAERIVSGSYDGVVRTWNLSGKIEKQY), 140–178 (GHTGAVRAVKFISSTRLVSGGNDRTLRLWKTKNDDVKHV), 195–232 (GHQAPVVSVDVQGDRILSASYDNSIGFWSTNHKDMTAV), 270–310 (SHKA…CVDT), 312–351 (STSYSLLSMVELPKLRLLACGSSARHITLHDPRADSSAKI), 358–398 (GHKN…SIYT), and 409–445 (GINDKVFAVKWAKGVGIISGGQDKKIQFNKGDNIFKN).

This sequence belongs to the WD repeat WDR12/YTM1 family. As to quaternary structure, component of the NOP7 complex, composed of ERB1, NOP7 and YTM1. The complex is held together by ERB1, which interacts with NOP7 via its N-terminal domain and with YTM1 via a high-affinity interaction between the seven-bladed beta-propeller domains of the 2 proteins. The NOP7 complex associates with the 66S pre-ribosome. Interacts (via UBL domain) with MDN1 (via VWFA/MIDAS domain).

It is found in the nucleus. The protein resides in the nucleolus. Its subcellular location is the nucleoplasm. Its function is as follows. Component of the NOP7 complex, which is required for maturation of the 25S and 5.8S ribosomal RNAs and formation of the 60S ribosome. The sequence is that of Ribosome biogenesis protein YTM1 from Eremothecium gossypii (strain ATCC 10895 / CBS 109.51 / FGSC 9923 / NRRL Y-1056) (Yeast).